Consider the following 569-residue polypeptide: Rab GTPase-binding effector protein 2 (569 aa).

Disordered regions lie at residues 1 to 38 (MAAAAPVAADDDERRRRPGAALEDSRPQEGANGEAELG), 181 to 267 (QRRP…ASLV), and 388 to 414 (RAEQLPSSAPQGPQQEQGEEESLPSSV). Alanine 2 carries the N-acetylalanine modification. Residues 29 to 38 (EGANGEAELG) show a composition bias toward low complexity. Residues 34-184 (EAELGELSRL…ELIQEIQRRP (151 aa)) adopt a coiled-coil conformation. Serine 189, serine 193, serine 200, and serine 204 each carry phosphoserine. The span at 245–257 (SSSSLPRSRQGLS) shows a compositional bias: low complexity. The stretch at 292 to 391 (WEQLQMEGRQ…EENQGLRAEQ (100 aa)) forms a coiled coil. Over residues 393–403 (PSSAPQGPQQE) the composition is skewed to low complexity. Residues 423 to 523 (RTRQEARAQL…LQAELETSEQ (101 aa)) adopt a coiled-coil conformation.

Belongs to the rabaptin family. Heterodimer with RABGEF1. The dimer binds RAB5A that has been activated by GTP-binding. Interacts with SDCCAG8; this interaction is important for ciliogenesis regulation. Interacts with RAB4; this interaction may mediate VEGFR2 cell surface expression.

The protein resides in the cytoplasm. It is found in the early endosome. Its subcellular location is the cytoskeleton. The protein localises to the microtubule organizing center. It localises to the centrosome. The protein resides in the cilium basal body. In terms of biological role, plays a role in membrane trafficking and in homotypic early endosome fusion. Participates in arteriogenesis by regulating vascular endothelial growth factor receptor 2/VEGFR2 cell surface expression and endosomal trafficking. By interacting with SDCCAG8, localizes to centrosomes and plays a critical role in ciliogenesis. The sequence is that of Rab GTPase-binding effector protein 2 (RABEP2) from Pongo abelii (Sumatran orangutan).